The primary structure comprises 93 residues: Alpha-defensin 16 (93 aa).

Residues Met-1–Ala-19 form the signal peptide. A propeptide spanning residues Asp-20–Ser-58 is cleaved from the precursor. Positions Ile-22–Leu-54 are disordered. 3 disulfide bridges follow: Cys-64–Cys-92, Cys-66–Cys-81, and Cys-71–Cys-91.

This sequence belongs to the alpha-defensin family. In terms of tissue distribution, paneth cells of the small bowel.

The protein resides in the secreted. Probably contributes to the antimicrobial barrier function of the small bowel mucosa. This chain is Alpha-defensin 16 (Defa16), found in Mus musculus (Mouse).